The chain runs to 431 residues: Glucose-1-phosphate adenylyltransferase (431 aa).

Lysine 39 contacts beta-D-fructose 1,6-bisphosphate. AMP-binding residues include arginine 40, histidine 46, and arginine 52. Tyrosine 114 contacts alpha-D-glucose 1-phosphate. Arginine 130 serves as a coordination point for AMP. Alpha-D-glucose 1-phosphate contacts are provided by residues glycine 179, 194–195 (EK), and serine 212. AMP contacts are provided by glutamate 370 and arginine 386. Beta-D-fructose 1,6-bisphosphate contacts are provided by residues 419–423 (REMLR) and 429–431 (QER).

The protein belongs to the bacterial/plant glucose-1-phosphate adenylyltransferase family. As to quaternary structure, homotetramer.

It catalyses the reaction alpha-D-glucose 1-phosphate + ATP + H(+) = ADP-alpha-D-glucose + diphosphate. The protein operates within glycan biosynthesis; glycogen biosynthesis. Its activity is regulated as follows. Allosterically activated by fructose-1,6-bisphosphate (F16BP) and inhibited by AMP. Functionally, involved in the biosynthesis of ADP-glucose, a building block required for the elongation reactions to produce glycogen. Catalyzes the reaction between ATP and alpha-D-glucose 1-phosphate (G1P) to produce pyrophosphate and ADP-Glc. The sequence is that of Glucose-1-phosphate adenylyltransferase from Salmonella dublin (strain CT_02021853).